A 168-amino-acid chain; its full sequence is Putative ankyrin repeat protein RBE_1411 (168 aa).

ANK repeat units lie at residues 59–88 (TIFS…LQHK), 98–127 (YGDT…DLTI), and 131–160 (KGET…ILGN).

This chain is Putative ankyrin repeat protein RBE_1411, found in Rickettsia bellii (strain RML369-C).